The sequence spans 175 residues: Ribosome maturation factor RimM (175 aa).

Residues 99-172 (ADEYHVSDLI…RLEVDAPPGL (74 aa)) enclose the PRC barrel domain.

It belongs to the RimM family. Binds ribosomal protein uS19.

Its subcellular location is the cytoplasm. In terms of biological role, an accessory protein needed during the final step in the assembly of 30S ribosomal subunit, possibly for assembly of the head region. Essential for efficient processing of 16S rRNA. May be needed both before and after RbfA during the maturation of 16S rRNA. It has affinity for free ribosomal 30S subunits but not for 70S ribosomes. In Picosynechococcus sp. (strain ATCC 27264 / PCC 7002 / PR-6) (Agmenellum quadruplicatum), this protein is Ribosome maturation factor RimM.